The sequence spans 410 residues: Eukaryotic initiation factor 4A (410 aa).

The Q motif signature appears at 37 to 65 (ESFDSMGLQENLLRGIYAYGFEKPSAIQQ). The Helicase ATP-binding domain maps to 68 to 238 (IVPFCKGLDV…RKFMNKPVRI (171 aa)). Residue 81-88 (AQSGTGKT) participates in ATP binding. A DEAD box motif is present at residues 186–189 (DEAD). A Helicase C-terminal domain is found at 249-410 (GIKQFYVNID…ELPANVADLL (162 aa)).

It belongs to the DEAD box helicase family. eIF4A subfamily. EIF4F is a multi-subunit complex, the composition of which varies with external and internal environmental conditions. It is composed of at least EIF4A, EIF4E and EIF4G.

The enzyme catalyses ATP + H2O = ADP + phosphate + H(+). Functionally, ATP-dependent RNA helicase which is a subunit of the eIF4F complex involved in cap recognition and is required for mRNA binding to ribosome. In the current model of translation initiation, eIF4A unwinds RNA secondary structures in the 5'-UTR of mRNAs which is necessary to allow efficient binding of the small ribosomal subunit, and subsequent scanning for the initiator codon. The protein is Eukaryotic initiation factor 4A of Zea mays (Maize).